The sequence spans 288 residues: Quinate/shikimate dehydrogenase (288 aa).

Substrate-binding residues include Lys71 and Asp107. Residues 132 to 135 (AGGA), 155 to 158 (NRRD), Lys205, 232 to 235 (CVYN), and Gly255 each bind NAD(+).

It belongs to the shikimate dehydrogenase family. In terms of assembly, homodimer.

The catalysed reaction is L-quinate + NAD(+) = 3-dehydroquinate + NADH + H(+). It catalyses the reaction L-quinate + NADP(+) = 3-dehydroquinate + NADPH + H(+). It carries out the reaction shikimate + NADP(+) = 3-dehydroshikimate + NADPH + H(+). The enzyme catalyses shikimate + NAD(+) = 3-dehydroshikimate + NADH + H(+). It functions in the pathway metabolic intermediate biosynthesis; chorismate biosynthesis; chorismate from D-erythrose 4-phosphate and phosphoenolpyruvate: step 4/7. Functionally, the actual biological function of YdiB remains unclear, nor is it known whether 3-dehydroshikimate or quinate represents the natural substrate. Catalyzes the reversible NAD-dependent reduction of both 3-dehydroshikimate (DHSA) and 3-dehydroquinate to yield shikimate (SA) and quinate, respectively. It can use both NAD or NADP for catalysis, however it has higher catalytic efficiency with NAD. The chain is Quinate/shikimate dehydrogenase from Escherichia coli (strain SMS-3-5 / SECEC).